A 690-amino-acid polypeptide reads, in one-letter code: Glycine--tRNA ligase beta subunit (690 aa).

Belongs to the class-II aminoacyl-tRNA synthetase family. Tetramer of two alpha and two beta subunits.

Its subcellular location is the cytoplasm. The catalysed reaction is tRNA(Gly) + glycine + ATP = glycyl-tRNA(Gly) + AMP + diphosphate. This chain is Glycine--tRNA ligase beta subunit, found in Pediococcus pentosaceus (strain ATCC 25745 / CCUG 21536 / LMG 10740 / 183-1w).